The chain runs to 480 residues: UDP-glycosyltransferase 72B1 (480 aa).

Catalysis depends on histidine 19, which acts as the Proton acceptor. Aspartate 117 (charge relay) is an active-site residue. The UDP site is built by serine 277, tryptophan 346, alanine 347, and histidine 364. Residues serine 277, tryptophan 346, alanine 347, histidine 364, tryptophan 367, asparagine 368, serine 369, glutamate 372, tyrosine 386, glutamate 388, and glutamine 389 each contribute to the UDP-alpha-D-glucose site. UDP contacts are provided by asparagine 368, serine 369, glutamate 372, and tyrosine 386.

Belongs to the UDP-glycosyltransferase family.

The enzyme catalyses hydroquinone + UDP-alpha-D-glucose = hydroquinone O-beta-D-glucopyranoside + UDP + H(+). Bifunctional O-glycosyltransferase and N-glycosyltransferase that can detoxify xenobiotics. Possesses high activity to metabolize the persistent pollutants 2,4,5-trichlorophenol (TCP) and 3,4-dichloroaniline (DCA). Also active on benzoates and benzoate derivatives in vitro. The sequence is that of UDP-glycosyltransferase 72B1 (UGT72B1) from Arabidopsis thaliana (Mouse-ear cress).